The following is a 379-amino-acid chain: Alcohol dehydrogenase class-3 (379 aa).

N-acetylalanine is present on A2. C47 serves as a coordination point for Zn(2+). H48 provides a ligand contact to NAD(+). T49 and H69 together coordinate an alcohol. The Zn(2+) site is built by H69, E70, C99, C102, C105, C113, and C177. Residues 202–207 (GLGTVG), D226, K231, I272, 295–297 (VGV), 320–322 (TAF), and R372 contribute to the NAD(+) site.

It belongs to the zinc-containing alcohol dehydrogenase family. Class-III subfamily. In terms of assembly, homodimer. Zn(2+) is required as a cofactor. Ubiquitous.

The protein localises to the cytoplasm. The enzyme catalyses a primary alcohol + NAD(+) = an aldehyde + NADH + H(+). It carries out the reaction a secondary alcohol + NAD(+) = a ketone + NADH + H(+). It catalyses the reaction S-(hydroxymethyl)glutathione + NADP(+) = S-formylglutathione + NADPH + H(+). The catalysed reaction is S-(hydroxymethyl)glutathione + NAD(+) = S-formylglutathione + NADH + H(+). The enzyme catalyses S-nitrosoglutathione + NADH + H(+) = S-(hydroxysulfenamide)glutathione + NAD(+). Its activity is regulated as follows. Repressed by thiol-modifying agents N-ethylmaleimide (NEM) and 5,5-dithio-bis-(2-nitrobenzoic acid) (DTNB), as well as by methyl methanethiosulfonate (MMTS) in a dose-dependent manner. Inhibited by hydrogen peroxide H(2)O(2). Its function is as follows. Alcohol dehydrogenase catalyzing the reduction of nitrosoglutathione. Can also use long-chain alcohols including cinnamyl alcohol and geraniol, and, to a lower extent, octanol. Plays a central role in formaldehyde detoxification. Not able to use ethanol (EtOH) as substrate. In Arabidopsis thaliana (Mouse-ear cress), this protein is Alcohol dehydrogenase class-3.